A 211-amino-acid polypeptide reads, in one-letter code: FMN-dependent NADH:quinone oxidoreductase 2 (211 aa).

17–19 provides a ligand contact to FMN; that stretch reads SYS.

It belongs to the azoreductase type 1 family. Homodimer. The cofactor is FMN.

It carries out the reaction 2 a quinone + NADH + H(+) = 2 a 1,4-benzosemiquinone + NAD(+). The enzyme catalyses N,N-dimethyl-1,4-phenylenediamine + anthranilate + 2 NAD(+) = 2-(4-dimethylaminophenyl)diazenylbenzoate + 2 NADH + 2 H(+). Strongly inhibited by Pb(2+) and weakly inhibited by Cu(2+), Hg(2+) and Fe(2+). Stable in presence of Ag(+). Quinone reductase that provides resistance to thiol-specific stress caused by electrophilic quinones. Contributes to resistance to 2-methylhydroquinone (2-MHQ) and catechol. Exhibits NADH-dependent 2,6-dichloroindophenol (DCIP) oxidoreductase activity. Its function is as follows. Also exhibits azoreductase activity. Catalyzes the reductive cleavage of the azo bond in aromatic azo compounds to the corresponding amines. Can reduce methyl red. The polypeptide is FMN-dependent NADH:quinone oxidoreductase 2 (Bacillus subtilis (strain 168)).